The sequence spans 167 residues: MICCDKVLSSVQSMPVIDKCSVTKCLQTAKQAAVLALSLFAVFASGSLSILSAAVLFSGTAAVLPYLLILTTALLGFVCAVIVLLRNLSAVVQSCKKRSPEEIEGAARPSDQQESGGRLSEESASPQASPTSSTFGLESALRSIGDSVSGAFDDINKDNSRSRSHSF.

2 consecutive transmembrane segments (helical) span residues 37–57 and 63–83; these read LSLF…AVLF and VLPY…AVIV. Disordered regions lie at residues 97 to 136 and 148 to 167; these read KRSP…STFG and VSGA…SHSF. The segment covering 122–134 has biased composition (low complexity); the sequence is ESASPQASPTSST. Residues 161–166 carry the Phosphorylation-dependent binding motif motif; it reads RSRSHS. Ser-166 is modified (phosphoserine).

Phosphorylated by chlamydial kinase Pnk1.

It localises to the secreted. Its subcellular location is the host vacuole. The protein resides in the host pathogen-containing vacuole. The protein localises to the host pathogen-containing vacuole membrane. Inclusion membrane protein probably involved in early modification events of the chlamydial inclusion. Binds to the host cell 14-3-3 beta (YWHAB); phosphorylation of Ser-166 is probably required. In Chlamydia trachomatis serovar D (strain ATCC VR-885 / DSM 19411 / UW-3/Cx), this protein is Inclusion membrane protein G (incG).